A 355-amino-acid chain; its full sequence is Ion-translocating oxidoreductase complex subunit D (355 aa).

The next 5 helical transmembrane spans lie at Gly-13–Val-33, Val-35–Ile-55, Val-77–Ile-97, Leu-98–Asn-118, and Val-128–Leu-148. Thr-186 carries the post-translational modification FMN phosphoryl threonine. Transmembrane regions (helical) follow at residues Ala-216–Trp-236, Pro-245–Ala-265, Ala-267–Ala-287, Pro-294–Ile-314, and Gly-318–Ile-338.

Belongs to the NqrB/RnfD family. As to quaternary structure, the complex is composed of six subunits: RnfA, RnfB, RnfC, RnfD, RnfE and RnfG. It depends on FMN as a cofactor.

Its subcellular location is the cell inner membrane. Part of a membrane-bound complex that couples electron transfer with translocation of ions across the membrane. This Actinobacillus succinogenes (strain ATCC 55618 / DSM 22257 / CCUG 43843 / 130Z) protein is Ion-translocating oxidoreductase complex subunit D.